The primary structure comprises 86 residues: Weak toxin 2 (86 aa).

Positions 1–23 (MKTLLLTLVVVAIVCLDLGYTLT) are cleaved as a signal peptide. Intrachain disulfides connect cysteine 24–cysteine 45, cysteine 27–cysteine 32, cysteine 38–cysteine 63, cysteine 67–cysteine 78, and cysteine 79–cysteine 84.

This sequence belongs to the three-finger toxin family. Ancestral subfamily. Orphan group II sub-subfamily. Expressed by the venom gland.

It is found in the secreted. Binds with low affinity to muscular (alpha-1-beta-1-delta-epsilon/CHRNA1-CHRNB1-CHRND-CHRNE) and very low affinity to neuronal (alpha-7/CHRNA7) nicotinic acetylcholine receptor (nAChR). This is Weak toxin 2 from Bungarus candidus (Malayan krait).